Here is a 53-residue protein sequence, read N- to C-terminus: Natriuretic peptide DNP-2 (53 aa).

An intrachain disulfide couples cysteine 7 to cysteine 23. A propeptide spanning residues 39-53 (IIRDLHPDSKQSQAA) is cleaved from the precursor.

It belongs to the natriuretic peptide family. As to expression, expressed by the venom gland.

It is found in the secreted. Functionally, exhibits vasodilator, natriuretic and diuretic properties in animal models and human tissues. Acts by stimulating cGMP via the natriuretic peptide receptor 1 (NPR1). Is a poor agonist of the atrial natriuretic peptide receptor 2 (NPR2). Is not degraded by neutral endopeptidase (NEP/MME). Binds to atrial natriuretic peptide clearance receptor (NPR-C/NPR3), which may be responsible of the removal of DNP from the circulation. Increases calcium uptake and induces histamine release from rat peritoneal mast cells. Increases calcium-activated potassium (KCa) current in gastric antral circular smooth muscle cells by increasing cGMP production and activating inositol trisphosphate receptors (IP3Rs). In vivo, reduces both systolic and diastolic blood pressure with no effect on heart rate, when intravenously injected in conscious rabbits. This chain is Natriuretic peptide DNP-2, found in Dendroaspis angusticeps (Eastern green mamba).